The chain runs to 91 residues: Small ribosomal subunit protein uS19 (91 aa).

It belongs to the universal ribosomal protein uS19 family.

Its function is as follows. Protein S19 forms a complex with S13 that binds strongly to the 16S ribosomal RNA. The polypeptide is Small ribosomal subunit protein uS19 (Dechloromonas aromatica (strain RCB)).